Consider the following 511-residue polypeptide: Bifunctional purine biosynthesis protein PurH (511 aa).

The MGS-like domain occupies 1–145 (MKRRALVSVS…KNHQHVTVVV (145 aa)).

This sequence belongs to the PurH family.

It catalyses the reaction (6R)-10-formyltetrahydrofolate + 5-amino-1-(5-phospho-beta-D-ribosyl)imidazole-4-carboxamide = 5-formamido-1-(5-phospho-D-ribosyl)imidazole-4-carboxamide + (6S)-5,6,7,8-tetrahydrofolate. The enzyme catalyses IMP + H2O = 5-formamido-1-(5-phospho-D-ribosyl)imidazole-4-carboxamide. It participates in purine metabolism; IMP biosynthesis via de novo pathway; 5-formamido-1-(5-phospho-D-ribosyl)imidazole-4-carboxamide from 5-amino-1-(5-phospho-D-ribosyl)imidazole-4-carboxamide (10-formyl THF route): step 1/1. The protein operates within purine metabolism; IMP biosynthesis via de novo pathway; IMP from 5-formamido-1-(5-phospho-D-ribosyl)imidazole-4-carboxamide: step 1/1. The chain is Bifunctional purine biosynthesis protein PurH from Halalkalibacterium halodurans (strain ATCC BAA-125 / DSM 18197 / FERM 7344 / JCM 9153 / C-125) (Bacillus halodurans).